The primary structure comprises 372 residues: O-glycoside alpha-1,2-mannosyltransferase homolog 2 (372 aa).

Topologically, residues 1–6 (MRISRL) are cytoplasmic. A helical; Signal-anchor for type II membrane protein membrane pass occupies residues 7-27 (LIRVLLGFVILFITYILFPSI). At 28–372 (PKALVNTLNV…NLTNEDYDEL (345 aa)) the chain is on the lumenal side. Catalysis depends on glutamate 271, which acts as the Nucleophile.

This sequence belongs to the glycosyltransferase 15 family.

The protein localises to the endoplasmic reticulum membrane. In terms of biological role, probable mannosyltransferase involved in O-glycosylation of cell wall and secreted proteins. This is O-glycoside alpha-1,2-mannosyltransferase homolog 2 (omh2) from Schizosaccharomyces pombe (strain 972 / ATCC 24843) (Fission yeast).